A 95-amino-acid polypeptide reads, in one-letter code: Large ribosomal subunit protein bL28 (95 aa).

Positions 1–28 (MARKRTLGGKAPQAGNKVSHSQRKTRRQ) are disordered.

The protein belongs to the bacterial ribosomal protein bL28 family.

This chain is Large ribosomal subunit protein bL28, found in Magnetococcus marinus (strain ATCC BAA-1437 / JCM 17883 / MC-1).